We begin with the raw amino-acid sequence, 407 residues long: Argininosuccinate synthase (407 aa).

An ATP-binding site is contributed by 10 to 18 (AYSGGLDTS). L-citrulline contacts are provided by Tyr88 and Ser93. Gly118 contacts ATP. Residues Thr120, Asn124, and Asp125 each coordinate L-aspartate. Position 124 (Asn124) interacts with L-citrulline. Arg128, Ser177, Ser186, Glu263, and Tyr275 together coordinate L-citrulline.

Belongs to the argininosuccinate synthase family. Type 1 subfamily. Homotetramer.

The protein localises to the cytoplasm. The catalysed reaction is L-citrulline + L-aspartate + ATP = 2-(N(omega)-L-arginino)succinate + AMP + diphosphate + H(+). It participates in amino-acid biosynthesis; L-arginine biosynthesis; L-arginine from L-ornithine and carbamoyl phosphate: step 2/3. The chain is Argininosuccinate synthase from Clostridium botulinum (strain Alaska E43 / Type E3).